A 494-amino-acid polypeptide reads, in one-letter code: Transcriptional regulator calD (494 aa).

The protein resides in the nucleus. In terms of biological role, transcription co-regulator that might be involved in the regulation of the expression of the gene cluster that mediates the biosynthesis of calbistrins and related compounds such as decumbenones. Calbistrin A is a secondary metabolite with an interesting structure that was recently found to have bioactivity against leukemia cells. It consists of two polyketides linked by an ester bond: a bicyclic decalin containing polyketide and a linear 12 carbon dioic acid structure. The chain is Transcriptional regulator calD from Penicillium decumbens.